The following is a 295-amino-acid chain: Acetylglutamate kinase (295 aa).

Residues 70 to 71, Arg-92, and Asn-191 contribute to the substrate site; that span reads GG.

It belongs to the acetylglutamate kinase family. ArgB subfamily.

The protein resides in the cytoplasm. It catalyses the reaction N-acetyl-L-glutamate + ATP = N-acetyl-L-glutamyl 5-phosphate + ADP. The protein operates within amino-acid biosynthesis; L-arginine biosynthesis; N(2)-acetyl-L-ornithine from L-glutamate: step 2/4. In terms of biological role, catalyzes the ATP-dependent phosphorylation of N-acetyl-L-glutamate. The sequence is that of Acetylglutamate kinase from Mycobacterium avium (strain 104).